A 182-amino-acid polypeptide reads, in one-letter code: Ribulose bisphosphate carboxylase small subunit, chloroplastic 1 (182 aa).

The N-terminal 42 residues, 1 to 42, are a transit peptide targeting the chloroplast; it reads MASIMMNKSVVLSKECAKPLATPKVTLNKRGFATTIATKNRE.

It belongs to the RuBisCO small chain family. Heterohexadecamer of 8 large and 8 small subunits.

It localises to the plastid. The protein localises to the chloroplast. RuBisCO catalyzes two reactions: the carboxylation of D-ribulose 1,5-bisphosphate, the primary event in carbon dioxide fixation, as well as the oxidative fragmentation of the pentose substrate. Both reactions occur simultaneously and in competition at the same active site. Although the small subunit is not catalytic it is essential for maximal activity. The polypeptide is Ribulose bisphosphate carboxylase small subunit, chloroplastic 1 (Acetabularia acetabulum (Mermaid's wine glass)).